The chain runs to 469 residues: Probable cobyric acid synthase (469 aa).

A GATase cobBQ-type domain is found at 241–427 (SGSIGIVRYP…VHGILENNEF (187 aa)). The active-site Nucleophile is Cys-319. The active site involves His-419.

This sequence belongs to the CobB/CobQ family. CobQ subfamily.

The protein operates within cofactor biosynthesis; adenosylcobalamin biosynthesis. Functionally, catalyzes amidations at positions B, D, E, and G on adenosylcobyrinic A,C-diamide. NH(2) groups are provided by glutamine, and one molecule of ATP is hydrogenolyzed for each amidation. This is Probable cobyric acid synthase from Picrophilus torridus (strain ATCC 700027 / DSM 9790 / JCM 10055 / NBRC 100828 / KAW 2/3).